A 213-amino-acid polypeptide reads, in one-letter code: uncharacterized protein (213 aa).

S-adenosyl-L-methionine-binding residues include G53, E74, and D97.

This sequence belongs to the methyltransferase superfamily. YrrT family.

Could be a S-adenosyl-L-methionine-dependent methyltransferase. This is an uncharacterized protein from Geobacillus sp. (strain WCH70).